The chain runs to 1347 residues: Protocadherin-11 X-linked (1347 aa).

A signal peptide spans 1–23 (MDLLSGTYIFAVLLACVVFHSGA). Over 24 to 812 (QEKNYTIREE…VSSPTSDYVK (789 aa)) the chain is Extracellular. 7 consecutive Cadherin domains span residues 26-139 (KNYT…APLF), 140-249 (PATV…HPVF), 250-355 (KETE…VPSI), 362-466 (NPIN…APVF), 467-570 (TQSF…SPVF), 571-673 (THNE…KPVF), and 677-795 (PSNY…APVT). 3 N-linked (GlcNAc...) asparagine glycosylation sites follow: N27, N48, and N54. N344 carries N-linked (GlcNAc...) asparagine glycosylation. N553 is a glycosylation site (N-linked (GlcNAc...) asparagine). N773 carries N-linked (GlcNAc...) asparagine glycosylation. Residues 813–833 (ILVAAVAGTVTVVVVIFITAV) form a helical membrane-spanning segment. Residues 834 to 1347 (VRCRQAPHLK…DSPIMEEHPL (514 aa)) lie on the Cytoplasmic side of the membrane. Disordered stretches follow at residues 1031 to 1050 (IWIH…GKSQ), 1057 to 1091 (LPEG…GYPQ), 1097 to 1116 (RATP…ESTF), and 1325 to 1347 (TFTP…EHPL).

The protein localises to the cell membrane. In terms of biological role, potential calcium-dependent cell-adhesion protein. The sequence is that of Protocadherin-11 X-linked (PCDH11X) from Pongo pygmaeus (Bornean orangutan).